Here is a 156-residue protein sequence, read N- to C-terminus: Translation initiation factor IF-1, chloroplastic (156 aa).

The tract at residues 1-35 (MAASLTLMTSPPCSRSSKSPSPSPSPSLSCNQQQQ) is disordered. The N-terminal 49 residues, 1 to 49 (MAASLTLMTSPPCSRSSKSPSPSPSPSLSCNQQQQYKPLLHHQWPPQIS), are a transit peptide targeting the chloroplast. A compositionally biased stretch (low complexity) spans 10-20 (SPPCSRSSKSP). The S1-like domain occupies 72–148 (GGSPSVQEQK…TRGRITYRLR (77 aa)).

The protein belongs to the IF-1 family. As to quaternary structure, component of the 30S ribosomal translation pre-initiation complex which assembles on the 30S ribosome in the order IF-2 and IF-3, IF-1 and N-formylmethionyl-tRNA(fMet); mRNA recruitment can occur at any time during PIC assembly.

The protein localises to the plastid. It is found in the chloroplast. In terms of biological role, one of the essential components for the initiation of protein synthesis. Stabilizes the binding of IF-2 and IF-3 on the 30S subunit to which N-formylmethionyl-tRNA(fMet) subsequently binds. Helps modulate mRNA selection, yielding the 30S pre-initiation complex (PIC). Upon addition of the 50S ribosomal subunit IF-1, IF-2 and IF-3 are released leaving the mature 70S translation initiation complex. The sequence is that of Translation initiation factor IF-1, chloroplastic (infA) from Mesembryanthemum crystallinum (Common ice plant).